The primary structure comprises 881 residues: Low-affinity phosphate transporter PHO90 (881 aa).

Positions 1–288 constitute an SPX domain; it reads MRFSHFLKYN…HLNTRTELIE (288 aa). 12 helical membrane passes run 417–437, 456–476, 493–513, 514–534, 539–559, 581–601, 663–683, 691–711, 718–738, 758–778, 805–825, and 854–874; these read IYFIILVTGLLLGIKTFNDAA, AIPLHITAFLVPLLVVLFKVL, ILAAMWSSTIMILLAGFTLGE, VLAQYNIAKVLASWLLAFAGC, VLLMAMCVVFFLSMWISNVAA, AQALVLGVALAANIGGMSSPI, FTVKQYYIITVTVATILLWCV, FGSSGQIAIIPIVLFFGTGLL, AFPWSIVILAMGGIALGKAVS, GVFAILCIFGILMLVVGTFVS, ILVFGCALLSSCGMGLASSGF, and ASILAFLCVITLGYGIMASVV.

Belongs to the CitM (TC 2.A.11) transporter family.

The protein resides in the membrane. In terms of biological role, low-affinity phosphate transporter involved in the control of cellular phosphate levels. This Saccharomyces cerevisiae (strain ATCC 204508 / S288c) (Baker's yeast) protein is Low-affinity phosphate transporter PHO90 (PHO90).